We begin with the raw amino-acid sequence, 1391 residues long: MNELANFANPLASTEHFDHIQISLASPERIRSWSFGEIKKPETINYRTFKPERDGLFCARIFGPIKDYECLCGKYKRMKYKGIVCEKCGVEVTVSKVRRERMGHIELAAPVAHIWFLKSLPSRIGLLLDMQLKQLERVLYFESYIVIEPGLTPLKKFQLLTEDELLEAQDQYGEDSFSAGIGAEAVKKLLEALDLETEREDLLEELKHTKSELKPKKIIKRLKVVESFIESGNRPEWMILEVIPVIPPELRPLVPLDGGRFATSDLNDLYRRVINRNNRLKRLMDLRAPDIIVRNEKRMLQEAVDALFDNGRRGRTITGGNKRPLKSLSDMLKGKQGRFRQNLLGKRVDYSGRSVITTGPELKLHQCGLPKKMALELFKPFIYSRLDAKGLSMTLKQAKKWVEKERKEVWDILEEVIREHPVMLNRAPTLHRLGIQAFEPVLIEGKAIQLHPLVCSAFNADFDGDQMAVHVPLSLEAQLEARVLMMSTNNILSPANGKPIIVPSQDMVLGIYYLSMLKENEPGEGMRLSNMTEVHQALNVGAVTLHSKIISRVPQVNEQGETYMKRVETTPGRMLLGETLPQNYKVPFETINRLLTKKDIADVIDTVYRHTGQKDTVLFADAIMSLGFKYACKAGISFGKDDMIVPAAKEALVEETRALVQDFEQQYQDGLITQQEKYNKVIDAWSRCGDRVAGEMMKEIQMVHKGPDGRELPVNAIYMMAHSGARGSAAQIKQLAGMRGLMAKPSGEIIETPIISNFKEGLTVLEYFNSTHGARKGLADTALKTANSGYLTRRLVDVSQDCVVVEDDCGTERALEMKAITQGGNVIASLGERILGRTLAEDIMGTDGQVAIPIGTLLDEAHIAVIEKIGIQSVKIRSPLVCESHGGVCAACYGRDLARGTPVNIGEAVGVIAAQSIGEPGTQLTMRTFHIGGAAQLNEQSHLEAVTDGRLQFRDLRTIIDPQGKQIALSRTGEVVLVGTDGRELASSRILLGAHLLHNDGDMVKKGDRLAEWDPFTIPVITESAGIVKYQDLVENQTLTEQVDEATGISQRVVIEYRAPRGKEDLRPRLTLMNGDSGETARYMLSPGTVISVDDGQEVLAGTVLARVSRESAKTRDITGGLPRVAELFEARKPKENAIIAKVSGRVEFGKDYKAKRKVIIRPDDGSEPIEYLVPKSKVIDAQEGDHVKRGDNLISGSPDPHDILEVLGVEALAEYLVSEIQEVYRLQGVKINDKHIETIVRQMLLKVEITHAGDSIFLPGEQVEKEDFEAVNAKLESQGQEPAQATPILLGITKASLQTRSFISAASFQETTRVLTEAAVQGKIDTLSGLKENVIVGRLIPAGTGAAMKRLRVTANSRDAALRAANKAVNFEQPTIAIESDNTDTPDAAE.

The Zn(2+) site is built by C70, C72, C85, and C88. The Mg(2+) site is built by D461, D463, and D465. Zn(2+)-binding residues include C809, C882, C889, and C892.

The protein belongs to the RNA polymerase beta' chain family. As to quaternary structure, the RNAP catalytic core consists of 2 alpha, 1 beta, 1 beta' and 1 omega subunit. When a sigma factor is associated with the core the holoenzyme is formed, which can initiate transcription. Requires Mg(2+) as cofactor. Zn(2+) serves as cofactor.

It catalyses the reaction RNA(n) + a ribonucleoside 5'-triphosphate = RNA(n+1) + diphosphate. Its function is as follows. DNA-dependent RNA polymerase catalyzes the transcription of DNA into RNA using the four ribonucleoside triphosphates as substrates. The sequence is that of DNA-directed RNA polymerase subunit beta' from Zymomonas mobilis subsp. mobilis (strain ATCC 31821 / ZM4 / CP4).